Reading from the N-terminus, the 499-residue chain is L-arabinose isomerase (499 aa).

Mn(2+) contacts are provided by Glu306, Glu333, His350, and His449.

Belongs to the arabinose isomerase family. The cofactor is Mn(2+).

It carries out the reaction beta-L-arabinopyranose = L-ribulose. Its pathway is carbohydrate degradation; L-arabinose degradation via L-ribulose; D-xylulose 5-phosphate from L-arabinose (bacterial route): step 1/3. In terms of biological role, catalyzes the conversion of L-arabinose to L-ribulose. This is L-arabinose isomerase from Aeromonas hydrophila subsp. hydrophila (strain ATCC 7966 / DSM 30187 / BCRC 13018 / CCUG 14551 / JCM 1027 / KCTC 2358 / NCIMB 9240 / NCTC 8049).